The following is a 155-amino-acid chain: Small ribosomal subunit protein uS7cz/uS7cy (155 aa).

Belongs to the universal ribosomal protein uS7 family. In terms of assembly, part of the 30S ribosomal subunit.

The protein resides in the plastid. The protein localises to the chloroplast. Its function is as follows. One of the primary rRNA binding proteins, it binds directly to 16S rRNA where it nucleates assembly of the head domain of the 30S subunit. In Calycanthus floridus var. glaucus (Eastern sweetshrub), this protein is Small ribosomal subunit protein uS7cz/uS7cy (rps7-A).